The primary structure comprises 508 residues: WD repeat-containing protein JIP5 (508 aa).

WD repeat units lie at residues 46-94 (LATG…GVET), 105-144 (RHKG…VVKK), 150-189 (GQNV…QTNL), 194-234 (HNGD…EGDF), 252-293 (DQED…LADQ), and 344-381 (SKLD…QLTP). The segment at 372-508 (DSEKSEQLTP…THGIRRFEGL (137 aa)) is disordered. Positions 491–508 (IKPERSMKTHGIRRFEGL) are enriched in basic and acidic residues.

The protein belongs to the WD repeat WDR55 family.

The protein localises to the nucleus. It localises to the nucleolus. This Eremothecium gossypii (strain ATCC 10895 / CBS 109.51 / FGSC 9923 / NRRL Y-1056) (Yeast) protein is WD repeat-containing protein JIP5 (JIP5).